The following is a 662-amino-acid chain: Probable quinol oxidase subunit 1 (662 aa).

2 helical membrane-spanning segments follow: residues 14 to 34 (WMII…IAVI) and 56 to 76 (IGIM…IDAL). His102 contacts Fe(II)-heme a. The next 8 membrane-spanning stretches (helical) occupy residues 103–123 (GVIM…NVVI), 140–160 (VSFW…IVGG), 187–207 (IAIQ…FVTI), 228–248 (FITT…LALM), 273–293 (FFWV…FGMY), 311–331 (MIWA…HHFF), 336–356 (GALI…PTGV), and 376–396 (MLFS…GVML). Residues His279, Tyr283, His328, and His329 each coordinate Cu cation. Positions 279 to 283 (HPEVY) form a cross-link, 1'-histidyl-3'-tyrosine (His-Tyr). Heme a3 is bound at residue His414. The next 5 helical transmembrane spans lie at 415–435 (FHYT…IFWY), 451–471 (CFWF…ILGL), 492–512 (FIST…VASI), 587–604 (PVGF…FFLI), and 608–627 (IVPA…WRSF). Position 416 (His416) interacts with Fe(II)-heme a.

The protein belongs to the heme-copper respiratory oxidase family. Cu cation is required as a cofactor. Requires ferriheme a as cofactor. Heme A3. serves as cofactor.

The protein localises to the cell membrane. It catalyses the reaction 2 a quinol + O2 = 2 a quinone + 2 H2O. Its pathway is energy metabolism; oxidative phosphorylation. Its function is as follows. Catalyzes quinol oxidation with the concomitant reduction of oxygen to water. This is Probable quinol oxidase subunit 1 (qoxB) from Staphylococcus epidermidis (strain ATCC 35984 / DSM 28319 / BCRC 17069 / CCUG 31568 / BM 3577 / RP62A).